The sequence spans 420 residues: tRNA (guanine-N(7)-)-methyltransferase non-catalytic subunit TRM82 (420 aa).

The segment covering 59-68 (KENDSKRQKS) has biased composition (basic and acidic residues). A disordered region spans residues 59–82 (KENDSKRQKSESGQAKVSKIPTPG). WD repeat units lie at residues 87–127 (PIYN…DNCL), 179–220 (GHVS…VIKN), 224–266 (GHHE…AKIE), and 340–379 (SYED…EETN).

It belongs to the WD repeat TRM82 family. Forms a heterodimer with the catalytic subunit TRM8.

Its subcellular location is the nucleus. It functions in the pathway tRNA modification; N(7)-methylguanine-tRNA biosynthesis. Its function is as follows. Required for the formation of N(7)-methylguanine at position 46 (m7G46) in tRNA. In the complex, it is required to stabilize and induce conformational changes of the catalytic subunit. This is tRNA (guanine-N(7)-)-methyltransferase non-catalytic subunit TRM82 from Meyerozyma guilliermondii (strain ATCC 6260 / CBS 566 / DSM 6381 / JCM 1539 / NBRC 10279 / NRRL Y-324) (Yeast).